A 227-amino-acid polypeptide reads, in one-letter code: Killer cell lectin-like receptor subfamily B member 1A (227 aa).

The Cytoplasmic portion of the chain corresponds to 1–45; it reads MDTARVYFGLKPPRTPGAWHESPPSLPPDACRCPRSHRLALKLSC. The short motif at 31–34 is the LCK-binding motif element; that stretch reads CRCP. Residues 46–66 traverse the membrane as a helical; Signal-anchor for type II membrane protein segment; that stretch reads AGLILLVVTLIGMSVLVRVLI. Residues 67-227 lie on the Extracellular side of the membrane; the sequence is QKPSIEKCYV…TLSNYVGYGH (161 aa). One can recognise a C-type lectin domain in the interval 93–212; it reads ECPQDWLSHR…NSDNRWICQK (120 aa). Cystine bridges form between Cys-94–Cys-105, Cys-122–Cys-210, and Cys-189–Cys-202.

In terms of assembly, homodimer; disulfide-linked. Interacts with tyrosine kinase LCK. As to expression, expressed in natural killer cells.

The protein resides in the membrane. Its function is as follows. Plays a stimulatory role on natural killer (NK) cell cytotoxicity. The sequence is that of Killer cell lectin-like receptor subfamily B member 1A (Klrb1a) from Mus musculus (Mouse).